We begin with the raw amino-acid sequence, 95 residues long: MSVDLATVKRVARLARIAVSDEEAERMTGELNGILGFVEQLSEVNVDGVEPMTSVMPMEMKKRDDIVADGDKAADIVANAPNSDRDFFLVPKVVE.

This sequence belongs to the GatC family. In terms of assembly, heterotrimer of A, B and C subunits.

It catalyses the reaction L-glutamyl-tRNA(Gln) + L-glutamine + ATP + H2O = L-glutaminyl-tRNA(Gln) + L-glutamate + ADP + phosphate + H(+). The catalysed reaction is L-aspartyl-tRNA(Asn) + L-glutamine + ATP + H2O = L-asparaginyl-tRNA(Asn) + L-glutamate + ADP + phosphate + 2 H(+). In terms of biological role, allows the formation of correctly charged Asn-tRNA(Asn) or Gln-tRNA(Gln) through the transamidation of misacylated Asp-tRNA(Asn) or Glu-tRNA(Gln) in organisms which lack either or both of asparaginyl-tRNA or glutaminyl-tRNA synthetases. The reaction takes place in the presence of glutamine and ATP through an activated phospho-Asp-tRNA(Asn) or phospho-Glu-tRNA(Gln). The protein is Aspartyl/glutamyl-tRNA(Asn/Gln) amidotransferase subunit C of Sinorhizobium fredii (strain NBRC 101917 / NGR234).